The following is a 237-amino-acid chain: Prospore formation at selected spindle poles protein 1 (237 aa).

The protein resides in the nucleus. The protein localises to the cytoplasm. Its subcellular location is the cytoskeleton. It localises to the microtubule organizing center. It is found in the spindle pole body. Functionally, involved in the pathway that organizes the shaping and sizing of the prospore membrane (PSM) during sporulation. Required to localize MPC54 to all four spindle pole bodies, and localize DON1 and SPO14 to four prospore membranes. In Saccharomyces cerevisiae (strain ATCC 204508 / S288c) (Baker's yeast), this protein is Prospore formation at selected spindle poles protein 1 (PFS1).